Reading from the N-terminus, the 434-residue chain is Purple acid phosphatase 22 (434 aa).

An N-terminal signal peptide occupies residues 1–22 (MKLFGLFLSFTLLFLCPFISQA). N-linked (GlcNAc...) asparagine glycosylation is present at Asn-116. Asp-148, Asp-175, and Tyr-178 together coordinate Fe cation. Asp-175 contributes to the Zn(2+) binding site. Residues Asn-208 and His-292 each coordinate Zn(2+). Substrate is bound at residue Asn-208. His-302 functions as the Proton donor in the catalytic mechanism. His-329 provides a ligand contact to Zn(2+). 329–331 (HVH) contacts substrate. His-331 contacts Fe cation. An N-linked (GlcNAc...) asparagine glycan is attached at Asn-403.

Belongs to the metallophosphoesterase superfamily. Purple acid phosphatase family. As to quaternary structure, homodimer. It depends on Fe cation as a cofactor. Zn(2+) is required as a cofactor. In terms of tissue distribution, expressed in roots, stems, leaves, flowers and siliques.

The protein resides in the secreted. It catalyses the reaction a phosphate monoester + H2O = an alcohol + phosphate. This is Purple acid phosphatase 22 (PAP22) from Arabidopsis thaliana (Mouse-ear cress).